Here is a 591-residue protein sequence, read N- to C-terminus: Cineole synthase 1, chloroplastic (591 aa).

A chloroplast-targeting transit peptide spans 1–44 (MSSLIMQVVIPKPAKFFHNNLFSLSSKRHRFSTTTTTRGGRWAR). R308, D345, D349, R486, and D489 together coordinate (2E)-geranyl diphosphate. Mg(2+) contacts are provided by D345 and D349. The DDXXD motif signature appears at 345–349 (DDVFD). Residues D489, T493, and E497 each coordinate Mg(2+).

The protein belongs to the terpene synthase family. Tpsb subfamily. As to quaternary structure, monomer. The cofactor is Mg(2+). It depends on Mn(2+) as a cofactor.

The protein localises to the plastid. The protein resides in the chloroplast. The catalysed reaction is (2E)-geranyl diphosphate + H2O = 1,8-cineole + diphosphate. It carries out the reaction (2E)-geranyl diphosphate = alpha-pinene + diphosphate. The enzyme catalyses (2E)-geranyl diphosphate = beta-pinene + diphosphate. It catalyses the reaction (2E)-geranyl diphosphate + H2O = (S)-alpha-terpineol + diphosphate. The catalysed reaction is (2E)-geranyl diphosphate = beta-myrcene + diphosphate. It carries out the reaction (2E)-geranyl diphosphate = sabinene + diphosphate. Its pathway is secondary metabolite biosynthesis; terpenoid biosynthesis. Its function is as follows. Monoterpene synthase (TPS) involved in the biosynthesis of monoterpene natural products, components of the chemical defense arsenal. Catalyzes the conversion of (2E)-geranyl diphosphate (GPP) into 1,8-cineole, and, as minor products, alpha-terpineol, beta-pinene, alpha-pinene, sabinene and myrcene. The sequence is that of Cineole synthase 1, chloroplastic from Salvia fruticosa (Greek sage).